The following is a 315-amino-acid chain: 31 kDa ribonucleoprotein, chloroplastic (315 aa).

The transit peptide at 1-71 directs the protein to the chloroplast; it reads MSCATKPIIK…LSPKKKTSVS (71 aa). The tract at residues 114 to 133 is disordered; it reads AGESDEVEADEEEEEFQEPP. Over residues 115–133 the composition is skewed to acidic residues; it reads GESDEVEADEEEEEFQEPP. RRM domains lie at 136 to 214 and 230 to 308; these read AKLF…KAAR and YRIY…VAED.

The protein localises to the plastid. It is found in the chloroplast. Its function is as follows. Could be involved in splicing and/or processing of chloroplast RNA's. The chain is 31 kDa ribonucleoprotein, chloroplastic from Nicotiana sylvestris (Wood tobacco).